The following is a 259-amino-acid chain: MLSKRIIPCLDVRDGRTTKGIKFRNNVDIGDPVDMGRFYYEEGADEIVFYDITASSDRRGIMLDVVKRVAETIFIPFSVGGGIRTLEDMRDVLLAGAEKVSVNSAAVLNPDIISQGAEAFGSQCIVLGMDVKHVAPSTRIPSGYEIVINGGRTTTGFDALWWALEAERLGAGEICLNSIDADGTRDGYELRLTRLISTSVRIPVIASGGAGTPNHLADVLKQGRADAALIASMVHYGTYSIRRIKQFLDDNGIRVRKTW.

Residues Asp-11 and Asp-130 contribute to the active site.

The protein belongs to the HisA/HisF family. As to quaternary structure, heterodimer of HisH and HisF.

The protein resides in the cytoplasm. The catalysed reaction is 5-[(5-phospho-1-deoxy-D-ribulos-1-ylimino)methylamino]-1-(5-phospho-beta-D-ribosyl)imidazole-4-carboxamide + L-glutamine = D-erythro-1-(imidazol-4-yl)glycerol 3-phosphate + 5-amino-1-(5-phospho-beta-D-ribosyl)imidazole-4-carboxamide + L-glutamate + H(+). It participates in amino-acid biosynthesis; L-histidine biosynthesis; L-histidine from 5-phospho-alpha-D-ribose 1-diphosphate: step 5/9. IGPS catalyzes the conversion of PRFAR and glutamine to IGP, AICAR and glutamate. The HisF subunit catalyzes the cyclization activity that produces IGP and AICAR from PRFAR using the ammonia provided by the HisH subunit. The protein is Imidazole glycerol phosphate synthase subunit HisF of Syntrophobacter fumaroxidans (strain DSM 10017 / MPOB).